The primary structure comprises 249 residues: 2,3-bisphosphoglycerate-dependent phosphoglycerate mutase (249 aa).

Residues 9 to 16 (RHGQSQWN), 22 to 23 (TG), Arg-61, 88 to 91 (ERHY), Lys-99, 115 to 116 (RR), and 184 to 185 (GN) each bind substrate. His-10 acts as the Tele-phosphohistidine intermediate in catalysis. Glu-88 functions as the Proton donor/acceptor in the catalytic mechanism.

This sequence belongs to the phosphoglycerate mutase family. BPG-dependent PGAM subfamily. In terms of assembly, homodimer.

The catalysed reaction is (2R)-2-phosphoglycerate = (2R)-3-phosphoglycerate. It functions in the pathway carbohydrate degradation; glycolysis; pyruvate from D-glyceraldehyde 3-phosphate: step 3/5. Its function is as follows. Catalyzes the interconversion of 2-phosphoglycerate and 3-phosphoglycerate. This chain is 2,3-bisphosphoglycerate-dependent phosphoglycerate mutase, found in Xylella fastidiosa (strain M12).